A 340-amino-acid chain; its full sequence is Phosphoribosylformylglycinamidine cyclo-ligase (340 aa).

Belongs to the AIR synthase family.

The protein resides in the cytoplasm. The enzyme catalyses 2-formamido-N(1)-(5-O-phospho-beta-D-ribosyl)acetamidine + ATP = 5-amino-1-(5-phospho-beta-D-ribosyl)imidazole + ADP + phosphate + H(+). The protein operates within purine metabolism; IMP biosynthesis via de novo pathway; 5-amino-1-(5-phospho-D-ribosyl)imidazole from N(2)-formyl-N(1)-(5-phospho-D-ribosyl)glycinamide: step 2/2. This Streptococcus agalactiae serotype III (strain NEM316) protein is Phosphoribosylformylglycinamidine cyclo-ligase.